The following is a 917-amino-acid chain: von Willebrand factor A domain-containing protein DDB_G0285975 (917 aa).

A disordered region spans residues 12–51 (DTTTTTTPTTPTTPTTPTTTPTTTTTPTTTPTTTTTSTTP). Positions 13 to 51 (TTTTTTPTTPTTPTTPTTTPTTTTTPTTTPTTTTTSTTP) are enriched in low complexity. Positions 87–215 (RYNTGLKNIS…NVTIHLTIIS (129 aa)) constitute a VIT domain. The VWFA domain maps to 339–507 (EFIFLIDCSG…NFEEQVMKLV (169 aa)). The 63-residue stretch at 679–741 (LFSSENRNQT…INSIPQKSNI (63 aa)) folds into the t-SNARE coiled-coil homology domain. 2 stretches are compositionally biased toward low complexity: residues 751 to 760 (SPSEVSTSKS) and 774 to 818 (NNNN…NNNN). The disordered stretch occupies residues 751–822 (SPSEVSTSKS…NNNNNNSDNS (72 aa)).

This is von Willebrand factor A domain-containing protein DDB_G0285975 from Dictyostelium discoideum (Social amoeba).